A 215-amino-acid chain; its full sequence is Deoxyribose-phosphate aldolase (215 aa).

Asp90 functions as the Proton donor/acceptor in the catalytic mechanism. Lys152 acts as the Schiff-base intermediate with acetaldehyde in catalysis. Lys181 functions as the Proton donor/acceptor in the catalytic mechanism.

The protein belongs to the DeoC/FbaB aldolase family. DeoC type 1 subfamily.

It is found in the cytoplasm. The enzyme catalyses 2-deoxy-D-ribose 5-phosphate = D-glyceraldehyde 3-phosphate + acetaldehyde. It functions in the pathway carbohydrate degradation; 2-deoxy-D-ribose 1-phosphate degradation; D-glyceraldehyde 3-phosphate and acetaldehyde from 2-deoxy-alpha-D-ribose 1-phosphate: step 2/2. In terms of biological role, catalyzes a reversible aldol reaction between acetaldehyde and D-glyceraldehyde 3-phosphate to generate 2-deoxy-D-ribose 5-phosphate. The protein is Deoxyribose-phosphate aldolase of Ureaplasma parvum serovar 3 (strain ATCC 27815 / 27 / NCTC 11736).